Here is an 834-residue protein sequence, read N- to C-terminus: Ras GTPase-activating protein 3 (834 aa).

C2 domains are found at residues 1–112 and 123–263; these read MAVE…DTWF and VQGK…EAWY. Position 2 is an N-acetylalanine (Ala2). Tyr66 carries the phosphotyrosine modification. Ser77 is modified (phosphoserine). A Phosphothreonine modification is found at Thr110. In terms of domain architecture, Ras-GAP spans 346–561; the sequence is GRVVPFISAI…DAVKNFLDLI (216 aa). The PH domain maps to 576 to 677; the sequence is ILLKEGFMIK…WIDILTKVSQ (102 aa). The segment at 679-715 adopts a Btk-type zinc-finger fold; it reads NQKRLTVFHPSAYLNGHWLCCRASSDTAIGCTPCTGG. Positions 687, 698, 699, and 709 each coordinate Zn(2+). Phosphoserine is present on residues Ser809 and Ser833.

In terms of biological role, inhibitory regulator of the Ras-cyclic AMP pathway. Binds inositol tetrakisphosphate (IP4). The protein is Ras GTPase-activating protein 3 (Rasa3) of Rattus norvegicus (Rat).